We begin with the raw amino-acid sequence, 182 residues long: Pyruvoyl-dependent arginine decarboxylase (182 aa).

The residue at position 44 (serine 44) is a Pyruvic acid (Ser).

This sequence belongs to the PdaD family. Pyruvate is required as a cofactor.

It catalyses the reaction L-arginine + H(+) = agmatine + CO2. In Thermoplasma volcanium (strain ATCC 51530 / DSM 4299 / JCM 9571 / NBRC 15438 / GSS1), this protein is Pyruvoyl-dependent arginine decarboxylase.